The sequence spans 736 residues: Neprilysin-2 (736 aa).

The Cytoplasmic segment spans residues 1 to 19 (MRPDEEDGTTKSPGSRWTR). A helical; Signal-anchor for type II membrane protein membrane pass occupies residues 20-40 (IWAIIALILLILFLLVLGAAI). Residues 41-736 (YFYINYKDSS…MNPREKCRVW (696 aa)) are Extracellular-facing. Residues 52-736 (VCLSPGCIKT…MNPREKCRVW (685 aa)) enclose the Peptidase M13 domain. 5 disulfide bridges follow: Cys53–Cys58, Cys76–Cys721, Cys84–Cys681, Cys142–Cys399, and Cys608–Cys733. A coiled-coil region spans residues 103 to 123 (FENLGQDLEFALKELLDENDE). His571 is a binding site for Zn(2+). Glu572 is an active-site residue. The Zn(2+) site is built by His575 and Glu633. The active-site Proton donor is Asp637.

Belongs to the peptidase M13 family. Zn(2+) is required as a cofactor. As to expression, expressed in muscle cells, GLR cells, SMB motor neurons and AIM interneurons.

It localises to the membrane. Functionally, required for olfactory plasticity, which is the change from positive chemotaxis to dispersal after prolonged exposure to an odorant. Thought to antagonise snet-1 by degrading excess snet-1 peptides and thus enabling olfactory plasticity. In Caenorhabditis elegans, this protein is Neprilysin-2.